A 155-amino-acid polypeptide reads, in one-letter code: Ribonuclease H (155 aa).

Residues 4 to 145 (ETKVIEIYTD…ADALARKAIT (142 aa)) enclose the RNase H type-1 domain. The Mg(2+) site is built by aspartate 13, glutamate 51, aspartate 73, and aspartate 137.

The protein belongs to the RNase H family. As to quaternary structure, monomer. It depends on Mg(2+) as a cofactor.

The protein resides in the cytoplasm. The catalysed reaction is Endonucleolytic cleavage to 5'-phosphomonoester.. Its function is as follows. Endonuclease that specifically degrades the RNA of RNA-DNA hybrids. This is Ribonuclease H from Bartonella bacilliformis (strain ATCC 35685 / KC583 / Herrer 020/F12,63).